Reading from the N-terminus, the 77-residue chain is MSDIADRVKKIVVEHLGVEEEKVTENASFIDDLGADSLDTVELVMAFEEEFGIEIPDDAAETIQTFGDAVKFISEAA.

The Carrier domain maps to 2–77 (SDIADRVKKI…DAVKFISEAA (76 aa)). The residue at position 37 (Ser-37) is an O-(pantetheine 4'-phosphoryl)serine.

The protein belongs to the acyl carrier protein (ACP) family. In terms of processing, 4'-phosphopantetheine is transferred from CoA to a specific serine of apo-ACP by AcpS. This modification is essential for activity because fatty acids are bound in thioester linkage to the sulfhydryl of the prosthetic group.

The protein resides in the cytoplasm. Its pathway is lipid metabolism; fatty acid biosynthesis. In terms of biological role, carrier of the growing fatty acid chain in fatty acid biosynthesis. This chain is Acyl carrier protein, found in Cereibacter sphaeroides (strain ATCC 17029 / ATH 2.4.9) (Rhodobacter sphaeroides).